The primary structure comprises 610 residues: All-trans-retinol 13,14-reductase (610 aa).

The N-terminal stretch at Met1 to Cys18 is a signal peptide.

It belongs to the carotenoid/retinoid oxidoreductase family. CrtISO subfamily. NAD(+) is required as a cofactor. It depends on NADP(+) as a cofactor. FAD serves as cofactor.

It localises to the endoplasmic reticulum membrane. It catalyses the reaction all-trans-13,14-dihydroretinol + A = all-trans-retinol + AH2. In terms of biological role, catalyzes the saturation of all-trans-retinol to all-trans-13,14-dihydroretinol. Does not exhibit any activity toward all-trans-retinoic acid, nor 9-cis, 11-cis or 13-cis-retinol isomers. May play a role in the metabolism of vitamin A. Independently of retinol conversion, may regulate liver metabolism upstream of MLXIPL/ChREBP. May play a role in adipocyte differentiation. This Macaca fascicularis (Crab-eating macaque) protein is All-trans-retinol 13,14-reductase (RETSAT).